The primary structure comprises 407 residues: Peptidase T (407 aa).

His81 serves as a coordination point for Zn(2+). The active site involves Asp83. Asp142 provides a ligand contact to Zn(2+). The active-site Proton acceptor is the Glu176. Zn(2+) is bound by residues Glu177, Asp199, and His381.

The protein belongs to the peptidase M20B family. It depends on Zn(2+) as a cofactor.

The protein resides in the cytoplasm. The enzyme catalyses Release of the N-terminal residue from a tripeptide.. Cleaves the N-terminal amino acid of tripeptides. This is Peptidase T from Streptococcus pneumoniae (strain ATCC 700669 / Spain 23F-1).